Here is a 162-residue protein sequence, read N- to C-terminus: Crossover junction endodeoxyribonuclease RuvC (162 aa).

Residues D8, E69, and H141 contribute to the active site. Mg(2+) is bound by residues D8, E69, and H141.

This sequence belongs to the RuvC family. As to quaternary structure, homodimer which binds Holliday junction (HJ) DNA. The HJ becomes 2-fold symmetrical on binding to RuvC with unstacked arms; it has a different conformation from HJ DNA in complex with RuvA. In the full resolvosome a probable DNA-RuvA(4)-RuvB(12)-RuvC(2) complex forms which resolves the HJ. It depends on Mg(2+) as a cofactor.

Its subcellular location is the cytoplasm. It carries out the reaction Endonucleolytic cleavage at a junction such as a reciprocal single-stranded crossover between two homologous DNA duplexes (Holliday junction).. Its function is as follows. The RuvA-RuvB-RuvC complex processes Holliday junction (HJ) DNA during genetic recombination and DNA repair. Endonuclease that resolves HJ intermediates. Cleaves cruciform DNA by making single-stranded nicks across the HJ at symmetrical positions within the homologous arms, yielding a 5'-phosphate and a 3'-hydroxyl group; requires a central core of homology in the junction. The consensus cleavage sequence is 5'-(A/T)TT(C/G)-3'. Cleavage occurs on the 3'-side of the TT dinucleotide at the point of strand exchange. HJ branch migration catalyzed by RuvA-RuvB allows RuvC to scan DNA until it finds its consensus sequence, where it cleaves and resolves the cruciform DNA. The sequence is that of Crossover junction endodeoxyribonuclease RuvC from Wolbachia sp. subsp. Brugia malayi (strain TRS).